The primary structure comprises 297 residues: uncharacterized protein (297 aa).

Residues 136-174 (FSETNDDSTDEEIDTPINDDDDDDKNNDADNNDINEDNK) are disordered. The span at 139-170 (TNDDSTDEEIDTPINDDDDDDKNNDADNNDIN) shows a compositional bias: acidic residues.

It to S.pombe SpBC725.03.

This is an uncharacterized protein from Saccharomyces cerevisiae (strain ATCC 204508 / S288c) (Baker's yeast).